We begin with the raw amino-acid sequence, 153 residues long: NAD(P)H-quinone oxidoreductase subunit N (153 aa).

The protein belongs to the complex I NdhN subunit family. In terms of assembly, NDH-1 can be composed of about 15 different subunits; different subcomplexes with different compositions have been identified which probably have different functions.

It is found in the cellular thylakoid membrane. It carries out the reaction a plastoquinone + NADH + (n+1) H(+)(in) = a plastoquinol + NAD(+) + n H(+)(out). The enzyme catalyses a plastoquinone + NADPH + (n+1) H(+)(in) = a plastoquinol + NADP(+) + n H(+)(out). Functionally, NDH-1 shuttles electrons from an unknown electron donor, via FMN and iron-sulfur (Fe-S) centers, to quinones in the respiratory and/or the photosynthetic chain. The immediate electron acceptor for the enzyme in this species is believed to be plastoquinone. Couples the redox reaction to proton translocation, and thus conserves the redox energy in a proton gradient. Cyanobacterial NDH-1 also plays a role in inorganic carbon-concentration. The protein is NAD(P)H-quinone oxidoreductase subunit N of Parasynechococcus marenigrum (strain WH8102).